The chain runs to 118 residues: Small ribosomal subunit protein uS13 (118 aa).

Positions 91–118 (HRHSLPVRGQRTKTNARTRKGPRKPIRK) are disordered.

It belongs to the universal ribosomal protein uS13 family. As to quaternary structure, part of the 30S ribosomal subunit. Forms a loose heterodimer with protein S19. Forms two bridges to the 50S subunit in the 70S ribosome.

Functionally, located at the top of the head of the 30S subunit, it contacts several helices of the 16S rRNA. In the 70S ribosome it contacts the 23S rRNA (bridge B1a) and protein L5 of the 50S subunit (bridge B1b), connecting the 2 subunits; these bridges are implicated in subunit movement. Contacts the tRNAs in the A and P-sites. This is Small ribosomal subunit protein uS13 from Hahella chejuensis (strain KCTC 2396).